The chain runs to 177 residues: Thymidine kinase (177 aa).

11-18 (GPMLSGKS) is an ATP binding site. Residue Glu83 is the Proton acceptor of the active site. Phe113 contacts substrate. 2 residues coordinate Zn(2+): Cys138 and Cys141. Residue 157–161 (IEIIG) participates in substrate binding. 2 residues coordinate Zn(2+): Cys170 and Cys173.

It belongs to the thymidine kinase family. As to quaternary structure, homotetramer. Two molecules of substrate bind to each enzyme tetramer.

The catalysed reaction is thymidine + ATP = dTMP + ADP + H(+). Its function is as follows. Phosphorylates thymidine and thymidine analogs, such as azidothymidine (AZT). Part of the salvage pathway for pyrimidine deoxyribonucleotide synthesis. This Monkeypox virus (strain Zaire-96-I-16) (MPX) protein is Thymidine kinase (OPG101).